The sequence spans 233 residues: Biosynthetic peptidoglycan transglycosylase (233 aa).

The helical transmembrane segment at 8 to 28 (LIALPVGIFIFFNAYVYGNII) threads the bilayer.

The protein belongs to the glycosyltransferase 51 family.

The protein resides in the cell inner membrane. It carries out the reaction [GlcNAc-(1-&gt;4)-Mur2Ac(oyl-L-Ala-gamma-D-Glu-L-Lys-D-Ala-D-Ala)](n)-di-trans,octa-cis-undecaprenyl diphosphate + beta-D-GlcNAc-(1-&gt;4)-Mur2Ac(oyl-L-Ala-gamma-D-Glu-L-Lys-D-Ala-D-Ala)-di-trans,octa-cis-undecaprenyl diphosphate = [GlcNAc-(1-&gt;4)-Mur2Ac(oyl-L-Ala-gamma-D-Glu-L-Lys-D-Ala-D-Ala)](n+1)-di-trans,octa-cis-undecaprenyl diphosphate + di-trans,octa-cis-undecaprenyl diphosphate + H(+). It functions in the pathway cell wall biogenesis; peptidoglycan biosynthesis. Peptidoglycan polymerase that catalyzes glycan chain elongation from lipid-linked precursors. The protein is Biosynthetic peptidoglycan transglycosylase of Neisseria meningitidis serogroup B (strain ATCC BAA-335 / MC58).